The chain runs to 236 residues: Small ribosomal subunit protein uS2c (236 aa).

It belongs to the universal ribosomal protein uS2 family.

It is found in the plastid. The protein is Small ribosomal subunit protein uS2c (rps2) of Cuscuta obtusiflora (Peruvian dodder).